Reading from the N-terminus, the 741-residue chain is Pentatricopeptide repeat-containing protein At1g08070, chloroplastic (741 aa).

PPR repeat units follow at residues 98–132, 133–167, 168–202, 203–229, 230–264, 265–299, 300–330, 331–365, 366–396, 403–433, 434–468, 469–499, and 505–535; these read NLLI…GLLP, NSYT…GCDL, DLYV…DVVS, YTAL…IPVK, DVVS…NVRP, DEST…GFGS, NLKI…LPYK, DVIS…GETP, NDVT…IDKR, ASSL…ILHK, SLSS…GIQP, DDIT…MTQD, and KLEH…MEME. Residues 540–615 are type E motif; it reads IWCSLLKACK…VPGCSSIEID (76 aa). Residues 616-646 form a type E(+) motif region; that stretch reads SVVHEFIIGDKFHPRNREIYGMLEEMEVLLE. Residues 647–741 form a type DYW motif region; sequence KAGFVPDTSE…DGVCSCNDYW (95 aa).

It belongs to the PPR family. PCMP-H subfamily. As to quaternary structure, interacts with ORRM1. Interacts with VAR3/OZ1.

It is found in the plastid. It localises to the chloroplast. Its function is as follows. Involved in multiple sites RNA editing events in chloroplasts. Involved in the editing of the site 9 of ndhB (ndhB-9) and site 1 of ndhG (ndhG-1) transcripts, which are two plastid-encoded subunits of the chloroplast NAD(P)H dehydrogenase (NDH) complex. Not essential for the activity of the NDH complex of the photosynthetic electron transport chain. The chain is Pentatricopeptide repeat-containing protein At1g08070, chloroplastic (PCMP-H12) from Arabidopsis thaliana (Mouse-ear cress).